The chain runs to 380 residues: MDSTAQQFPLNHDLQVQKDQKGVVEEDEEQIHKRIRNYESHSGFSEYCTLFGHEKSVTCVSVSPNKRWIATSSSDGTIKIWSALTFRLECTLFGHYRGISQVKWATGSKYLASASDDKTIRIWDFEKRCSVRCLKGHTNYVSSIDFNPLGTLLVSGSWDETVRIWNLQDGTCLRMLPAHSEPIISVSISADGTLCATASYDGMARIWDVLSGQCLKTLVEPINVPLSNLQFTENRKYLLVSNLNSQIRLWDYRRNRVVRIFDSHVNTRYSMSWDCYSSKNIPKNTEALPNNDSSYPDDAESFMHDAYLLIPSEDGTIQITDPSTKIIIDDSIRHSDDPETSLLNVTSLGPFIITSGTDPYVRVWAPSLLLSKHEKDGFSP.

7 WD repeats span residues 52–91 (GHEK…LECT), 94–133 (GHYR…SVRC), 136–177 (GHTN…RMLP), 179–219 (HSEP…KTLV), 221–262 (PINV…RIFD), 291–330 (NDSS…IIDD), and 335–374 (SDDP…SKHE). Ser379 carries the phosphoserine modification.

Component of the Set1 complex composed of ash2, sdc1, set1, shg1, spp1, swd1, swd2 and swd3.

It localises to the nucleus. Its function is as follows. The Set1 complex specifically methylates 'Lys-4' of histone H3. The protein is Set1 complex component swd3 of Schizosaccharomyces pombe (strain 972 / ATCC 24843) (Fission yeast).